A 699-amino-acid chain; its full sequence is MLKLSGEGLRDSYHSRRDQIALKNLQSDVTEAKSDFTKETLASQNTKMISSIVISQMIDENKSRENRASLPLPCAIAQSRAHHAKQSLANRSGVNIHRAFALLPGRLGIPAPSDERGPEAELPPKEERPCGGPRRGFASITITARRVGPPARALVWGTAGDSLCPKCRAEDTLFQAPPALANGAHPGRHQRSFACTEFSRNSSVVRLKVPEAHTGLCERRKYWVTHADDKETSFSPDTPLSGKSPLVFSSCVHLRVSQQCPDSIYYVDKSLSVPIEPPQIASPKMHRSVLSLNLNCSSHRLTADGVDGLVNREPISEALKQELLEGDQDLVGQRWNPGLQESHLKETPSLRRVHLGTGACPWSGSFPLENTELANVGANQVTVRKGEKDHTTHCHASDHANQLSIHIPGWSYRAVHTKVFSGSSKRQQGEVCMTVSAPPVEQKPTRHFLPIGDSSPSDDCLSRDLSEPTERRHQSFLKPRILFPGFLCPLQDVCASLQEDNGVQIESKFPKGDYTCCDLVVKIKECKKSEDPTTPEPSPAAPSPAPRDGAGSPGLSEDCSESQQTPARSLTLQEALEVRKPQFISRSQERLKKLEHMVQQRKAQRKEDLRQKQSLLPIRTSKKQFTIPHPLSDNLFKPKERCISEKEMHMRSKRIYDNLPEVKKKKEEQRKRVILQSNRLRAEVFKKQLLDQLLQRNAV.

Residues 48–116 (MISSIVISQM…LGIPAPSDER (69 aa)) are required for interaction with p53/TP53. Disordered stretches follow at residues 107 to 134 (LGIPAPSDERGPEAELPPKEERPCGGPR), 443 to 473 (KPTRHFLPIGDSSPSDDCLSRDLSEPTERRH), and 528 to 569 (KSED…PARS). Basic and acidic residues-rich tracts occupy residues 113–129 (SDERGPEAELPPKEERP) and 460–473 (CLSRDLSEPTERRH). The segment at 116–224 (RGPEAELPPK…GLCERRKYWV (109 aa)) is required for interaction with HDAC1. Positions 534-545 (TPEPSPAAPSPA) are enriched in pro residues. The segment at 571 to 699 (TLQEALEVRK…LDQLLQRNAV (129 aa)) is ALMS motif.

In terms of assembly, interacts with HDAC1; the interaction prevents binding of HDAC1 to CDKN1A/p21 and facilitates the acetylation and stabilization of CDKN1A/p21. Interacts with p53/TP53; the interaction inhibits binding of p53/TP53 and MDM2.

The protein localises to the cytoplasm. Its subcellular location is the cytoskeleton. It is found in the microtubule organizing center. It localises to the centrosome. In terms of biological role, tumor suppressor that is required to sustain G2/M checkpoint after DNA damage. Acts as a p53/TP53 activator by inhibiting MDM2 binding to p53/TP53 and stimulating non-proteolytic polyubiquitination of p53/TP53. Exhibits ubiquitin ligase (E3) activity and assemble ubiquitin polymers through 'Lys-11'- (K11-), 'Lys-29'- (K29-) and 'Lys-63'- (K63)-linkages, independently of the ubiquitin-conjugating enzyme (E2). Promotes p53/TP53-dependent transcription of CDKN1A/p21, leading to robust checkpoint response. Mediates CDKN1A/p21 protein stability in a ubiquitin-independent manner. Interacts with HDAC1 and prevents binding of HDAC1 to CDKN1A/p21 and facilitates the acetylation and stabilization of CDKN1A/p21. May have a role in the assembly of primary cilia. This chain is (E2-independent) E3 ubiquitin-conjugating enzyme FATS, found in Homo sapiens (Human).